The primary structure comprises 332 residues: MRHATLYRYQLPMDSGVILRNEKLTQREGFIVELTENGRTARGEIAPLPGFSRETLEDAGLQAQALLEQWVKGHAIEWDAQHPSVAFGLSMAHYELEQALPEQGNYYVAPLCTGDPDELLPVLNNLPGQKVAKVKVGLYEPIRDGMLVNLFLESMPDLTLRLDANRAWTPAKALKFAQYVAPSLRSRIAFLEEPCQSPSESIAFSIDTGIAIAWDETLQEAVRDADFALENLLGVKTIVIKPTLIGSVYRVEALIEKAKTLGLQAVISSSLESSLGLNQLARLAHKLLPNEVPGLDTIGLFRAQLETPWPNSSLPVVALQEQSIVWRSESSL.

K135 serves as the catalytic Proton donor. D163, E192, and D215 together coordinate Mg(2+). The Proton acceptor role is filled by K241.

This sequence belongs to the mandelate racemase/muconate lactonizing enzyme family. MenC type 1 subfamily. The cofactor is a divalent metal cation.

It catalyses the reaction (1R,6R)-6-hydroxy-2-succinyl-cyclohexa-2,4-diene-1-carboxylate = 2-succinylbenzoate + H2O. The protein operates within quinol/quinone metabolism; 1,4-dihydroxy-2-naphthoate biosynthesis; 1,4-dihydroxy-2-naphthoate from chorismate: step 4/7. Its pathway is quinol/quinone metabolism; menaquinone biosynthesis. Functionally, converts 2-succinyl-6-hydroxy-2,4-cyclohexadiene-1-carboxylate (SHCHC) to 2-succinylbenzoate (OSB). This Vibrio cholerae serotype O1 (strain ATCC 39315 / El Tor Inaba N16961) protein is o-succinylbenzoate synthase.